The primary structure comprises 365 residues: 3,4-dihydroxy-2-butanone 4-phosphate synthase (365 aa).

Residues Met1–Ile201 form a DHBP synthase region. D-ribulose 5-phosphate is bound by residues Arg27 to Glu28, Asp32, Arg140 to Thr144, and Glu164. Glu28 is a binding site for Mg(2+). Position 143 (His143) interacts with Mg(2+). Residues His202–Glu365 are GTP cyclohydrolase II-like.

This sequence in the N-terminal section; belongs to the DHBP synthase family. In the C-terminal section; belongs to the GTP cyclohydrolase II family. Requires Mg(2+) as cofactor. Mn(2+) serves as cofactor.

It catalyses the reaction D-ribulose 5-phosphate = (2S)-2-hydroxy-3-oxobutyl phosphate + formate + H(+). Its pathway is cofactor biosynthesis; riboflavin biosynthesis; 2-hydroxy-3-oxobutyl phosphate from D-ribulose 5-phosphate: step 1/1. In terms of biological role, catalyzes the conversion of D-ribulose 5-phosphate to formate and 3,4-dihydroxy-2-butanone 4-phosphate. The sequence is that of 3,4-dihydroxy-2-butanone 4-phosphate synthase (ribB) from Pseudomonas aeruginosa (strain ATCC 15692 / DSM 22644 / CIP 104116 / JCM 14847 / LMG 12228 / 1C / PRS 101 / PAO1).